Here is a 316-residue protein sequence, read N- to C-terminus: Apolipoprotein E (316 aa).

The signal sequence occupies residues 1–18; the sequence is MKVLWVALVVALLAGCQA. Repeat copies occupy residues 79-100, 101-122, 123-144, 145-166, 167-188, 189-210, 211-232, and 233-254. An 8 X 22 AA approximate tandem repeats region spans residues 79–254; the sequence is VLMEETMKEV…RLDKMRQQLE (176 aa). M142 is subject to Methionine sulfoxide. At S146 the chain carries Phosphoserine. Residues 157 to 167 form an LDL and other lipoprotein receptors binding region; the sequence is HLRKLRKRLLR. A heparin-binding site is contributed by 161–164; that stretch reads LRKR. A lipid-binding and lipoprotein association region spans residues 209 to 289; it reads AATLSTQVGQ…SWFEPLVEDM (81 aa). Heparin is bound at residue 228-235; sequence RQKLHGRL. The segment at 265-316 is homooligomerization; the sequence is SQIRLQAEAFQARLRSWFEPLVEDMQRQWAGLVEKVQLALHLSPTSPPSENH. The tract at residues 277–289 is specificity for association with VLDL; that stretch reads RLRSWFEPLVEDM.

The protein belongs to the apolipoprotein A1/A4/E family. In terms of assembly, homotetramer. May interact with ABCA1; functionally associated with ABCA1 in the biogenesis of HDLs. May interact with APP/A4 amyloid-beta peptide; the interaction is extremely stable in vitro but its physiological significance is unclear. May interact with MAPT. May interact with MAP2. In the cerebrospinal fluid, interacts with secreted SORL1. Interacts with PMEL; this allows the loading of PMEL luminal fragment on ILVs to induce fibril nucleation. In terms of processing, APOE exists as multiple glycosylated and sialylated glycoforms within cells and in plasma. The extent of glycosylation and sialylation are tissue and context specific. Post-translationally, glycated in plasma VLDL. Phosphorylated by FAM20C in the extracellular medium.

Its subcellular location is the secreted. The protein localises to the extracellular space. It is found in the extracellular matrix. The protein resides in the extracellular vesicle. It localises to the endosome. Its subcellular location is the multivesicular body. APOE is an apolipoprotein, a protein associating with lipid particles, that mainly functions in lipoprotein-mediated lipid transport between organs via the plasma and interstitial fluids. APOE is a core component of plasma lipoproteins and is involved in their production, conversion and clearance. Apolipoproteins are amphipathic molecules that interact both with lipids of the lipoprotein particle core and the aqueous environment of the plasma. As such, APOE associates with chylomicrons, chylomicron remnants, very low density lipoproteins (VLDL) and intermediate density lipoproteins (IDL) but shows a preferential binding to high-density lipoproteins (HDL). It also binds a wide range of cellular receptors including the LDL receptor/LDLR and the very low-density lipoprotein receptor/VLDLR that mediate the cellular uptake of the APOE-containing lipoprotein particles. Finally, APOE also has a heparin-binding activity and binds heparan-sulfate proteoglycans on the surface of cells, a property that supports the capture and the receptor-mediated uptake of APOE-containing lipoproteins by cells. The sequence is that of Apolipoprotein E (APOE) from Ovis aries (Sheep).